We begin with the raw amino-acid sequence, 720 residues long: Engulfment and cell motility protein 3 (720 aa).

Residues 307 to 479 (EQRDQLQALR…VVREQLARTL (173 aa)) enclose the ELMO domain. A PH domain is found at 542–664 (RLCEGMLFRK…TDGLSALLGS (123 aa)). The short motif at 696 to 706 (PEQPPPVPPPP) is the SH3-binding element.

In terms of assembly, probably interacts directly with the SH3-domain of DOCK1 via its SH3-binding site. Part of a complex with DOCK1 and RAC1. Interacts with ADGRB3.

It localises to the cytoplasm. In terms of biological role, involved in cytoskeletal rearrangements required for phagocytosis of apoptotic cells and cell motility. Acts in association with DOCK1 and CRK. Was initially proposed to be required in complex with DOCK1 to activate Rac Rho small GTPases. May enhance the guanine nucleotide exchange factor (GEF) activity of DOCK1. The sequence is that of Engulfment and cell motility protein 3 (Elmo3) from Mus musculus (Mouse).